Here is a 455-residue protein sequence, read N- to C-terminus: Serine--tRNA ligase (455 aa).

252-254 (TAE) is a binding site for L-serine. ATP is bound by residues 283–285 (RKE) and V299. E306 serves as a coordination point for L-serine. An ATP-binding site is contributed by 370-373 (EVVS). T406 lines the L-serine pocket.

This sequence belongs to the class-II aminoacyl-tRNA synthetase family. Type-1 seryl-tRNA synthetase subfamily. As to quaternary structure, homodimer. The tRNA molecule binds across the dimer.

The protein resides in the cytoplasm. It catalyses the reaction tRNA(Ser) + L-serine + ATP = L-seryl-tRNA(Ser) + AMP + diphosphate + H(+). The catalysed reaction is tRNA(Sec) + L-serine + ATP = L-seryl-tRNA(Sec) + AMP + diphosphate + H(+). It functions in the pathway aminoacyl-tRNA biosynthesis; selenocysteinyl-tRNA(Sec) biosynthesis; L-seryl-tRNA(Sec) from L-serine and tRNA(Sec): step 1/1. Catalyzes the attachment of serine to tRNA(Ser). Is also able to aminoacylate tRNA(Sec) with serine, to form the misacylated tRNA L-seryl-tRNA(Sec), which will be further converted into selenocysteinyl-tRNA(Sec). The protein is Serine--tRNA ligase of Thermococcus kodakarensis (strain ATCC BAA-918 / JCM 12380 / KOD1) (Pyrococcus kodakaraensis (strain KOD1)).